The primary structure comprises 579 residues: General transcriptional corepressor tupA (579 aa).

Residues Asn83 to Ser101 are compositionally biased toward polar residues. The segment at Asn83–Trp258 is disordered. 3 stretches are compositionally biased toward low complexity: residues Asn109–Asn128, Gln157–Leu198, and Met207–Asn224. The span at Lys227–Thr256 shows a compositional bias: basic and acidic residues. 7 WD repeats span residues Gln279–Val319, Asp325–Thr364, Gly367–Thr406, Gly413–Arg452, Gly455–Arg494, Gly501–Met540, and Gly543–Ser579.

Belongs to the WD repeat TUP1 family. Associates with trfA to form the trfA-tupA corepressor complex.

The protein localises to the nucleus. Functionally, acts as a component of the trfA-tupA corepressor complex which is involved in the repression of many genes in a wide variety of physiological processes. May also be involved in the derepression of at least some target genes. The complex is recruited to target genes by interaction with DNA-bound transcriptional repressors. The complex recruits histone deacetylases to produce a repressive chromatin structure, interacts with hypoacetylated N-terminal tails of histones H3 and H4 that have been programmed for repression by the action of histone deacetylases and interferes directly with the transcriptional machinery by associating with the RNA polymerase II mediator complex. This Dictyostelium discoideum (Social amoeba) protein is General transcriptional corepressor tupA (tupA).